A 471-amino-acid chain; its full sequence is Putative multidrug resistance protein MdtD (471 aa).

A run of 13 helical transmembrane segments spans residues 12-32 (LWIV…VNTA), 49-69 (MVIV…GWMA), 72-92 (IGVR…SLFC), 101-123 (LVMS…RLTV), 138-158 (FVTL…GILV), 165-185 (WIFL…LWLM), 195-215 (FDIF…LALD), 220-240 (LGIS…SILW), 265-285 (IGLF…FMTP), 286-306 (VFLQ…MIPM), 342-362 (LVFM…VLFF), 393-413 (LLSM…GLLL), and 431-451 (VFLY…LIFA).

It belongs to the major facilitator superfamily. TCR/Tet family.

The protein localises to the cell inner membrane. This is Putative multidrug resistance protein MdtD from Enterobacter sp. (strain 638).